The primary structure comprises 333 residues: Tetraacyldisaccharide 4'-kinase (333 aa).

57–64 (IVGGAGKT) serves as a coordination point for ATP.

Belongs to the LpxK family.

It carries out the reaction a lipid A disaccharide + ATP = a lipid IVA + ADP + H(+). Its pathway is glycolipid biosynthesis; lipid IV(A) biosynthesis; lipid IV(A) from (3R)-3-hydroxytetradecanoyl-[acyl-carrier-protein] and UDP-N-acetyl-alpha-D-glucosamine: step 6/6. Functionally, transfers the gamma-phosphate of ATP to the 4'-position of a tetraacyldisaccharide 1-phosphate intermediate (termed DS-1-P) to form tetraacyldisaccharide 1,4'-bis-phosphate (lipid IVA). The polypeptide is Tetraacyldisaccharide 4'-kinase (Dechloromonas aromatica (strain RCB)).